Consider the following 42-residue polypeptide: Gastric inhibitory polypeptide (42 aa).

This sequence belongs to the glucagon family.

The protein resides in the secreted. Its function is as follows. Potent stimulator of insulin secretion and relatively poor inhibitor of gastric acid secretion. This chain is Gastric inhibitory polypeptide (GIP), found in Sus scrofa (Pig).